A 121-amino-acid polypeptide reads, in one-letter code: MRKSISIAFVIAITIFMSHLNVFTVYSLTPCEEATNLLTPCLRYLWAPPEAKPSPECCSGLDKVNKGVKTYDDRHDMCICLSSEAAITSADQYKFDNLPKLCNVALFAPVGPKFDCSTIKV.

A signal peptide spans 1-27; the sequence is MRKSISIAFVIAITIFMSHLNVFTVYS. Disulfide bonds link cysteine 31-cysteine 80, cysteine 41-cysteine 57, cysteine 58-cysteine 102, and cysteine 78-cysteine 116.

The protein belongs to the plant LTP family.

Functionally, plant non-specific lipid-transfer proteins transfer phospholipids as well as galactolipids across membranes. May play a role in wax or cutin deposition in the cell walls of expanding epidermal cells and certain secretory tissues. The chain is Non-specific lipid-transfer protein 9 (LTP9) from Arabidopsis thaliana (Mouse-ear cress).